Reading from the N-terminus, the 422-residue chain is Aminopentol aminotransferase (422 aa).

Lys-258 carries the N6-(pyridoxal phosphate)lysine modification.

Belongs to the class-III pyridoxal-phosphate-dependent aminotransferase family. Requires pyridoxal 5'-phosphate as cofactor.

Its subcellular location is the cytoplasm. It catalyses the reaction (2S,3S,5R,10R,12S,14S,15R,16R)-2-amino-12,16-dimethylicosane-3,5,10,14,15-pentol + pyruvate = (3S,5R,10R,12S,14S,15R,16R)-3,5,10,14,15-pentahydroxy-12,16-dimethylicosan-2-one + L-alanine. In terms of biological role, involved in degradation of fumonisin B1. Catalyzes the deamination of aminopentol (HFB1) to 2-keto-HFB1. Pyruvate is the preferred cosubstrate, but it can also use several other alpha-keto acids as amino group acceptors. The chain is Aminopentol aminotransferase (fumI) from Sphingopyxis macrogoltabida (Sphingomonas macrogoltabidus).